The sequence spans 517 residues: Cytochrome P450 monooxygenase penP (517 aa).

The helical transmembrane segment at 17-37 (GEATVIWILVALVLVAYLILP) threads the bilayer. Position 456 (cysteine 456) interacts with heme. N-linked (GlcNAc...) asparagine glycosylation occurs at asparagine 501.

This sequence belongs to the cytochrome P450 family. It depends on heme as a cofactor.

It localises to the membrane. Its pathway is secondary metabolite biosynthesis. Functionally, cytochrome P450 monooxygenase; part of the gene cluster that mediates the biosynthesis of the indole diterpenes penitrems. The geranylgeranyl diphosphate (GGPP) synthase penG catalyzes the first step in penitrem biosynthesis via conversion of farnesyl pyrophosphate and isopentyl pyrophosphate into geranylgeranyl pyrophosphate (GGPP). Condensation of indole-3-glycerol phosphate with GGPP by the prenyl transferase penC then forms 3-geranylgeranylindole (3-GGI). Epoxidation by the FAD-dependent monooxygenase penM leads to a epoxidized-GGI that is substrate of the terpene cyclase penB for cyclization to yield paspaline. Paspaline is subsequently converted to 13-desoxypaxilline by the cytochrome P450 monooxygenase penP, the latter being then converted to paxilline by the cytochrome P450 monooxygenase penQ. Paxilline is converted to beta-paxitriol via C-10 ketoreduction by the short-chain dehydrogenase PC-15 which can be monoprenylated at the C-20 by the indole diterpene prenyltransferase penD. A two-step elimination (acetylation and elimination) process performed by the O-acetyltransferase PC-16 and the P.simplicissimum ptmI-ortholog not yet identified in P.crustosum, leads to the production of the prenylated form of penijanthine. The FAD-linked oxidoreductase ptmO then converts the prenylated form of penijanthine into PC-M5 which is in turn transformed into PC-M4 by the aromatic dimethylallyltransferase PC-22. A series of oxidation steps involving 4 cytochrome P450 monooxygenases (PC-21, PC-05, PC-23, PC-20) and a FAD-dependent monooxygenase (PC-14) are required for the transformation of PC-M4 to penitrems A and E. Synthesis of these final products is proposed to proceed via penitrems D and C (PC-21, PC-05, PC-14) and penitrems B and F (PC-21, PC-05, PC-14, PC-23). In Penicillium crustosum (Blue mold fungus), this protein is Cytochrome P450 monooxygenase penP.